Reading from the N-terminus, the 367-residue chain is Histidinol-phosphate aminotransferase (367 aa).

Lys-221 carries the N6-(pyridoxal phosphate)lysine modification.

The protein belongs to the class-II pyridoxal-phosphate-dependent aminotransferase family. Histidinol-phosphate aminotransferase subfamily. As to quaternary structure, homodimer. Requires pyridoxal 5'-phosphate as cofactor.

The catalysed reaction is L-histidinol phosphate + 2-oxoglutarate = 3-(imidazol-4-yl)-2-oxopropyl phosphate + L-glutamate. The protein operates within amino-acid biosynthesis; L-histidine biosynthesis; L-histidine from 5-phospho-alpha-D-ribose 1-diphosphate: step 7/9. The chain is Histidinol-phosphate aminotransferase from Erythrobacter litoralis (strain HTCC2594).